The primary structure comprises 396 residues: ATP phosphoribosyltransferase regulatory subunit (396 aa).

Belongs to the class-II aminoacyl-tRNA synthetase family. HisZ subfamily. Heteromultimer composed of HisG and HisZ subunits.

The protein localises to the cytoplasm. It functions in the pathway amino-acid biosynthesis; L-histidine biosynthesis; L-histidine from 5-phospho-alpha-D-ribose 1-diphosphate: step 1/9. Its function is as follows. Required for the first step of histidine biosynthesis. May allow the feedback regulation of ATP phosphoribosyltransferase activity by histidine. This chain is ATP phosphoribosyltransferase regulatory subunit, found in Cellvibrio japonicus (strain Ueda107) (Pseudomonas fluorescens subsp. cellulosa).